The sequence spans 376 residues: tRNA-specific 2-thiouridylase MnmA (376 aa).

Residues 17–24 (GMSGGVDS) and Met-43 each bind ATP. Positions 103–105 (NPD) are interaction with target base in tRNA. The active-site Nucleophile is the Cys-108. Cys-108 and Cys-204 form a disulfide bridge. An ATP-binding site is contributed by Gly-132. The tract at residues 154–156 (KDQ) is interaction with tRNA. The active-site Cysteine persulfide intermediate is the Cys-204. The interaction with tRNA stretch occupies residues 316-317 (RY).

It belongs to the MnmA/TRMU family.

The protein localises to the cytoplasm. It carries out the reaction S-sulfanyl-L-cysteinyl-[protein] + uridine(34) in tRNA + AH2 + ATP = 2-thiouridine(34) in tRNA + L-cysteinyl-[protein] + A + AMP + diphosphate + H(+). Its function is as follows. Catalyzes the 2-thiolation of uridine at the wobble position (U34) of tRNA, leading to the formation of s(2)U34. The chain is tRNA-specific 2-thiouridylase MnmA from Pseudomonas savastanoi pv. phaseolicola (strain 1448A / Race 6) (Pseudomonas syringae pv. phaseolicola (strain 1448A / Race 6)).